Reading from the N-terminus, the 105-residue chain is Pyrimidine/purine nucleoside phosphorylase (105 aa).

The protein belongs to the nucleoside phosphorylase PpnP family.

The catalysed reaction is a purine D-ribonucleoside + phosphate = a purine nucleobase + alpha-D-ribose 1-phosphate. It catalyses the reaction adenosine + phosphate = alpha-D-ribose 1-phosphate + adenine. The enzyme catalyses cytidine + phosphate = cytosine + alpha-D-ribose 1-phosphate. It carries out the reaction guanosine + phosphate = alpha-D-ribose 1-phosphate + guanine. The catalysed reaction is inosine + phosphate = alpha-D-ribose 1-phosphate + hypoxanthine. It catalyses the reaction thymidine + phosphate = 2-deoxy-alpha-D-ribose 1-phosphate + thymine. The enzyme catalyses uridine + phosphate = alpha-D-ribose 1-phosphate + uracil. It carries out the reaction xanthosine + phosphate = alpha-D-ribose 1-phosphate + xanthine. Catalyzes the phosphorolysis of diverse nucleosides, yielding D-ribose 1-phosphate and the respective free bases. Can use uridine, adenosine, guanosine, cytidine, thymidine, inosine and xanthosine as substrates. Also catalyzes the reverse reactions. This chain is Pyrimidine/purine nucleoside phosphorylase, found in Paracidovorax citrulli (strain AAC00-1) (Acidovorax citrulli).